The following is a 706-amino-acid chain: Drebrin (706 aa).

Ala-2 carries the N-acetylalanine modification. Residues 3–134 (GVSFSGHRLE…DAGAIGQRLS (132 aa)) enclose the ADF-H domain. Residues Ser-141 and Ser-142 each carry the phosphoserine modification. The span at 209-236 (ERMEQERQEQEERERRYREREQQIEEHR) shows a compositional bias: basic and acidic residues. A disordered region spans residues 209 to 497 (ERMEQERQEQ…AEPAASVTSV (289 aa)). Ser-241 carries the phosphoserine modification. A compositionally biased stretch (basic and acidic residues) spans 288–298 (DNPREFFRQQE). Positions 331 to 345 (SDSGPSSSSSSSSSP) are enriched in low complexity. Phosphoserine is present on Ser-344. Over residues 357-366 (RTPNLSSSLP) the composition is skewed to polar residues. Phosphothreonine is present on residues Thr-379 and Thr-383. Polar residues predominate over residues 382–396 (PTRSPSDSSTASTPI). Residues Ser-385, Ser-387, and Ser-393 each carry the phosphoserine modification. A Phosphothreonine modification is found at Thr-394. Pro residues predominate over residues 411–422 (QPPPPPPPPPPT). Residues 453 to 497 (AAEPPQAQEPPLLQSSPLEDSMCTESPEQAALAAPAEPAASVTSV) are compositionally biased toward low complexity. Ser-468 bears the Phosphoserine mark. At Thr-550 the chain carries Phosphothreonine. The tract at residues 633–677 (EPHLLTNGETTQKEGTQASEGYFSQSQEEEFAQSEEPCAKVPPPV) is disordered. Polar residues predominate over residues 639-651 (NGETTQKEGTQAS). At Ser-658 the chain carries Phosphoserine.

As to quaternary structure, interacts with RUFY3. Interacts with CXCR4; this interaction is enhanced by antigenic stimulation. Interacts (via ADF-H domain) with ZMYND8 (via N-terminus); the interaction leads to sequestering of ZMYND8 in the cytoplasm. Expressed in the hippocampus, with expression in the pyramidal cells of CA1, CA2 and CA3 and in the granule cells of the dentate gyrus (at protein level). Highly expressed in brain, also present in stomach and to a lesser degree in kidney, colon, and urinary bladder. The E2 isoform is specifically expressed in adult stomach, kidney, and cultured cells.

It localises to the cytoplasm. The protein localises to the cell projection. Its subcellular location is the dendrite. It is found in the cell cortex. The protein resides in the cell junction. It localises to the growth cone. Actin cytoskeleton-organizing protein that plays a role in the formation of cell projections. Required for actin polymerization at immunological synapses (IS) and for the recruitment of the chemokine receptor CXCR4 to IS. Plays a role in dendritic spine morphogenesis and organization, including the localization of the dopamine receptor DRD1 to the dendritic spines. Involved in memory-related synaptic plasticity in the hippocampus. This Mus musculus (Mouse) protein is Drebrin (Dbn1).